Here is a 502-residue protein sequence, read N- to C-terminus: Transmembrane prolyl 4-hydroxylase (502 aa).

The tract at residues 1-29 is disordered; that stretch reads MAAAAVTGQRPETAAAEEASRPQWAPPDH. The Cytoplasmic segment spans residues 1–60; it reads MAAAAVTGQRPETAAAEEASRPQWAPPDHCQAQAAAGLGDGEDAPVRPLCKPRGICSRAY. A helical; Signal-anchor for type II membrane protein transmembrane segment spans residues 61 to 81; that stretch reads FLVLMVFVHLYLGNVLALLLF. Over 82-502 the chain is Lumenal; that stretch reads VHYSNGDESS…RAYRDARVEL (421 aa). The interval 89–111 is disordered; it reads ESSDPGPQHRAQGPGPEPTLGPL. 2 EF-hand domains span residues 185-220 and 224-259; these read TMQV…GNGW and PESI…DFHK. Residues D198, N200, D202, H204, E209, D237, D239, D241, and E248 each contribute to the Ca(2+) site. Residues 310–460 form the Fe2OG dioxygenase domain; it reads LSEPLQVVRY…KWIANNWINV (151 aa). Positions 328 and 330 each coordinate Fe cation. N-linked (GlcNAc...) asparagine glycans are attached at residues N348 and N368. A Fe cation-binding site is contributed by E374. A glycan (N-linked (GlcNAc...) asparagine) is linked at N382. K451 lines the 2-oxoglutarate pocket.

As to quaternary structure, homodimer. Fe(2+) is required as a cofactor. It depends on L-ascorbate as a cofactor. Glycosylated. As to expression, widely expressed with highest levels in adult pancreas, heart, skeletal muscle, brain, placenta, kidney and adrenal gland. Expressed at lower levels in epiphyseal cartilage and in fibroblasts.

Its subcellular location is the endoplasmic reticulum membrane. It catalyses the reaction L-prolyl-[hypoxia-inducible factor alpha subunit] + 2-oxoglutarate + O2 = trans-4-hydroxy-L-prolyl-[hypoxia-inducible factor alpha subunit] + succinate + CO2. Its function is as follows. Catalyzes the post-translational formation of 4-hydroxyproline in hypoxia-inducible factor (HIF) alpha proteins. Hydroxylates HIF1A at 'Pro-402' and 'Pro-564'. May function as a cellular oxygen sensor and, under normoxic conditions, may target HIF through the hydroxylation for proteasomal degradation via the von Hippel-Lindau ubiquitination complex. The protein is Transmembrane prolyl 4-hydroxylase (P4HTM) of Homo sapiens (Human).